Here is a 625-residue protein sequence, read N- to C-terminus: DNA-directed RNA polymerase subunit gamma (625 aa).

The Zn(2+) site is built by Cys-71, Cys-73, Cys-86, and Cys-89. The Mg(2+) site is built by Asp-467, Asp-469, and Asp-471.

The protein belongs to the RNA polymerase beta' chain family. RpoC1 subfamily. In cyanobacteria the RNAP catalytic core is composed of 2 alpha, 1 beta, 1 beta', 1 gamma and 1 omega subunit. When a sigma factor is associated with the core the holoenzyme is formed, which can initiate transcription. Mg(2+) serves as cofactor. Zn(2+) is required as a cofactor.

The catalysed reaction is RNA(n) + a ribonucleoside 5'-triphosphate = RNA(n+1) + diphosphate. DNA-dependent RNA polymerase catalyzes the transcription of DNA into RNA using the four ribonucleoside triphosphates as substrates. The sequence is that of DNA-directed RNA polymerase subunit gamma from Trichormus variabilis (strain ATCC 29413 / PCC 7937) (Anabaena variabilis).